We begin with the raw amino-acid sequence, 209 residues long: Ribosomal RNA large subunit methyltransferase E (209 aa).

Residues Gly-63, Trp-65, Asp-83, Asp-99, and Asp-124 each contribute to the S-adenosyl-L-methionine site. Residue Lys-164 is the Proton acceptor of the active site.

Belongs to the class I-like SAM-binding methyltransferase superfamily. RNA methyltransferase RlmE family.

Its subcellular location is the cytoplasm. The enzyme catalyses uridine(2552) in 23S rRNA + S-adenosyl-L-methionine = 2'-O-methyluridine(2552) in 23S rRNA + S-adenosyl-L-homocysteine + H(+). Functionally, specifically methylates the uridine in position 2552 of 23S rRNA at the 2'-O position of the ribose in the fully assembled 50S ribosomal subunit. The polypeptide is Ribosomal RNA large subunit methyltransferase E (Colwellia psychrerythraea (strain 34H / ATCC BAA-681) (Vibrio psychroerythus)).